The following is a 394-amino-acid chain: Protein-glutamate methylesterase/protein-glutamine glutaminase of group 2 operon (394 aa).

In terms of domain architecture, Response regulatory spans 21–139; the sequence is RVMVVDDSAV…ELTGADTFKR (119 aa). The residue at position 72 (D72) is a 4-aspartylphosphate. The disordered stretch occupies residues 148–201; the sequence is LGAAARRSGPRREGTAAARPPGAAAQPTSGYTLPSPVRAKPETGPLTVRPLPPD. A compositionally biased stretch (low complexity) spans 162 to 172; that stretch reads TAAARPPGAAA. A CheB-type methylesterase domain is found at 200-382; sequence PDGRPDVIAI…SAILPLKEIG (183 aa). Residues S212, H238, and D334 contribute to the active site.

Belongs to the CheB family. Post-translationally, phosphorylated by CheA. Phosphorylation of the N-terminal regulatory domain activates the methylesterase activity.

Its subcellular location is the cytoplasm. The catalysed reaction is [protein]-L-glutamate 5-O-methyl ester + H2O = L-glutamyl-[protein] + methanol + H(+). It carries out the reaction L-glutaminyl-[protein] + H2O = L-glutamyl-[protein] + NH4(+). Functionally, involved in chemotaxis. Part of a chemotaxis signal transduction system that modulates chemotaxis in response to various stimuli. Catalyzes the demethylation of specific methylglutamate residues introduced into the chemoreceptors (methyl-accepting chemotaxis proteins or MCP) by CheR. Also mediates the irreversible deamidation of specific glutamine residues to glutamic acid. The chain is Protein-glutamate methylesterase/protein-glutamine glutaminase of group 2 operon from Rhodospirillum centenum (strain ATCC 51521 / SW).